Reading from the N-terminus, the 436-residue chain is 3-ketoacyl-CoA thiolase (436 aa).

Cys-99 (acyl-thioester intermediate) is an active-site residue. Active-site proton acceptor residues include His-392 and Cys-422.

It belongs to the thiolase-like superfamily. Thiolase family. As to quaternary structure, heterotetramer of two alpha chains (FadJ) and two beta chains (FadI).

The protein resides in the cytoplasm. It catalyses the reaction an acyl-CoA + acetyl-CoA = a 3-oxoacyl-CoA + CoA. Its pathway is lipid metabolism; fatty acid beta-oxidation. Functionally, catalyzes the final step of fatty acid oxidation in which acetyl-CoA is released and the CoA ester of a fatty acid two carbons shorter is formed. The polypeptide is 3-ketoacyl-CoA thiolase (Pseudoalteromonas translucida (strain TAC 125)).